Consider the following 347-residue polypeptide: NADH-ubiquinone oxidoreductase chain 2 (347 aa).

11 helical membrane-spanning segments follow: residues 1–21, 25–45, 59–79, 96–116, 122–142, 149–169, 178–198, 200–220, 237–257, 274–294, and 325–345; these read MNPL…MMVV, HWLL…PIMM, YLLT…INLM, TLMT…FWVP, IPLT…LSIL, INLH…GWGG, IMAY…LYNP, LTLL…MLFI, MPVI…LPPL, DMLI…YFYM, and LLPT…MLSI.

This sequence belongs to the complex I subunit 2 family. As to quaternary structure, core subunit of respiratory chain NADH dehydrogenase (Complex I) which is composed of 45 different subunits. Interacts with TMEM242.

The protein resides in the mitochondrion inner membrane. The enzyme catalyses a ubiquinone + NADH + 5 H(+)(in) = a ubiquinol + NAD(+) + 4 H(+)(out). In terms of biological role, core subunit of the mitochondrial membrane respiratory chain NADH dehydrogenase (Complex I) which catalyzes electron transfer from NADH through the respiratory chain, using ubiquinone as an electron acceptor. Essential for the catalytic activity and assembly of complex I. This chain is NADH-ubiquinone oxidoreductase chain 2, found in Balaenoptera physalus (Fin whale).